The sequence spans 622 residues: MPIRRLPPELINRIAAGEVVERPASAVKELVENALDAGATKIEVQADGGGLTRILVADDGCGLSAEELPVAVERHATSKLNPGEDGEYDLLRIGTLGFRGEALPSIGSVARLSIASRARKADGSQAEAHAIFVEGGAVGAVSPAAFPGPHGARVEVRDLFYATPARLKFMKSERAEALAITEELKRQAMAHEAVSFALDVDGRRTLRLPAEAAGPDGRLARLSAIMGREFSDNALAIDHEREGVRLSGFAGLPTFNRGNAAHQYLFVNGRPVRDRLLQGALRAAYADFLARDRHPLAALYVELDPSQVDVNVHPAKAEVRFRDPGLVRGLIVGGLRHALAAAGHRASTTVSMAALGGFRPQSMPPPQPSAAGFSAWRQGGWTPSPAAAAAQILPGLSEVSARAEPEALDAYAAGGMAEAASPAPVFDPVDYPLGAARAQVHETYIVAQTRDGVVIVDQHAAHERLVYERMKAEMAEGGVARQALLLPEVVELDPAEAERVVARADELAALGLVVEAFGPGAVLVREVPALLGETDAAGLVRDIADDLSENGQALALKERLEEVCGTMACHGSVRAGRRLTAPEMNALLRQMEATPHSGQCNHGRPTYVELKLADIERLFGRR.

The protein belongs to the DNA mismatch repair MutL/HexB family.

Functionally, this protein is involved in the repair of mismatches in DNA. It is required for dam-dependent methyl-directed DNA mismatch repair. May act as a 'molecular matchmaker', a protein that promotes the formation of a stable complex between two or more DNA-binding proteins in an ATP-dependent manner without itself being part of a final effector complex. In Phenylobacterium zucineum (strain HLK1), this protein is DNA mismatch repair protein MutL.